A 1417-amino-acid chain; its full sequence is Cytoadherence-linked asexual protein 3.1 (1417 aa).

The N-terminal stretch at 1 to 24 (MVSFFKTPIFILIIFLYLNEKVIC) is a signal peptide. 4 disulfide bridges follow: Cys333-Cys361, Cys407-Cys413, Cys517-Cys545, and Cys521-Cys542. A helical transmembrane segment spans residues 1204 to 1224 (LVNGFMYAFCFFAISQMYAYF). The segment at 1383–1417 (TYIDTEKMNEADSADSDDEKDSDTPDDELMISRFH) is disordered. Residues 1394–1411 (DSADSDDEKDSDTPDDEL) are compositionally biased toward acidic residues.

Self-associates. Component of the RhopH complex. RhopH complex is at least composed of CLAG3.1/CLAG3.2, RhopH2 and RhopH3 with a 1:1:1 subunit stoichiometry. CLAG3.1/CLAG3.2 mediates subunit association through independent contacts with RhopH2 and RhopH3, which do not directly interact with one another. Interacts with RhopH2. Interacts with RhopH3.

The protein resides in the host cell membrane. It localises to the host cytoplasm. It is found in the cytoplasmic vesicle. The protein localises to the secretory vesicle. Its subcellular location is the rhoptry. Functionally, participates in the formation of new permeability pathways in Plasmodium-infected erythrocytes enabling the uptake of nutrients from the blood plasma. The polypeptide is Cytoadherence-linked asexual protein 3.1 (Plasmodium falciparum (isolate 3D7)).